The sequence spans 96 residues: Small ribosomal subunit protein bS6 (96 aa).

It belongs to the bacterial ribosomal protein bS6 family.

In terms of biological role, binds together with bS18 to 16S ribosomal RNA. This Salinispora arenicola (strain CNS-205) protein is Small ribosomal subunit protein bS6.